The following is a 1152-amino-acid chain: Nucleolar protein 6 (1152 aa).

Disordered stretches follow at residues 1 to 30 and 36 to 55; these read MPSAGERPAVKMGPAPAGEQHRRATEDPEV and EGMDKEKAPSRKRARTEPPA. Serine 65 is modified (phosphoserine). A coiled-coil region spans residues 92–128; the sequence is LLRLQVEELLKEVRLSEKKKERIDNFLKEVTKRIQKV. Residues serine 292 and serine 817 each carry the phosphoserine modification.

It belongs to the NRAP family. Part of the small subunit (SSU) processome, composed of more than 70 proteins and the RNA chaperone small nucleolar RNA (snoRNA) U3. Interacts with RRP7A; required for NOL6 localization to nucleolus. As to expression, ubiquitously expressed.

The protein resides in the nucleus. Its subcellular location is the nucleolus. It is found in the chromosome. Part of the small subunit (SSU) processome, first precursor of the small eukaryotic ribosomal subunit. During the assembly of the SSU processome in the nucleolus, many ribosome biogenesis factors, an RNA chaperone and ribosomal proteins associate with the nascent pre-rRNA and work in concert to generate RNA folding, modifications, rearrangements and cleavage as well as targeted degradation of pre-ribosomal RNA by the RNA exosome. This Mus musculus (Mouse) protein is Nucleolar protein 6 (Nol6).